The sequence spans 146 residues: Peptidyl-lysine N-acetyltransferase YiaC (146 aa).

Residues 1–143 (MIREAQRSEL…PTWIMSWPVV (143 aa)) form the N-acetyltransferase domain.

Belongs to the acetyltransferase family.

It catalyses the reaction L-lysyl-[protein] + acetyl-CoA = N(6)-acetyl-L-lysyl-[protein] + CoA + H(+). Its function is as follows. N-epsilon-lysine acetyltransferase that catalyzes acetylation of a large number of proteins. Overexpression inhibits motility. The protein is Peptidyl-lysine N-acetyltransferase YiaC (yiaC) of Escherichia coli (strain K12).